Consider the following 305-residue polypeptide: Homoserine O-succinyltransferase (305 aa).

Catalysis depends on C142, which acts as the Acyl-thioester intermediate. The substrate site is built by K163 and S192. Residue H235 is the Proton acceptor of the active site. The active site involves E237. Position 249 (R249) interacts with substrate.

The protein belongs to the MetA family.

Its subcellular location is the cytoplasm. It catalyses the reaction L-homoserine + succinyl-CoA = O-succinyl-L-homoserine + CoA. The protein operates within amino-acid biosynthesis; L-methionine biosynthesis via de novo pathway; O-succinyl-L-homoserine from L-homoserine: step 1/1. Its function is as follows. Transfers a succinyl group from succinyl-CoA to L-homoserine, forming succinyl-L-homoserine. The polypeptide is Homoserine O-succinyltransferase (Psychromonas ingrahamii (strain DSM 17664 / CCUG 51855 / 37)).